We begin with the raw amino-acid sequence, 397 residues long: Riboflavin biosynthesis protein RibBA (397 aa).

The interval Met1 to His199 is DHBP synthase. D-ribulose 5-phosphate is bound by residues Arg26 to Glu27, Asp31, Arg138 to Thr142, and Glu162. Residue Glu27 coordinates Mg(2+). His141 serves as a coordination point for Mg(2+). Residues His200–Leu397 form a GTP cyclohydrolase II region. Arg250–Glu254 is a GTP binding site. Zn(2+)-binding residues include Cys255, Cys266, and Cys268. GTP contacts are provided by residues Gln271, Glu293–Arg295, and Thr315. Asp327 functions as the Proton acceptor; for GTP cyclohydrolase activity in the catalytic mechanism. Residue Arg329 is the Nucleophile; for GTP cyclohydrolase activity of the active site. Thr350 and Lys355 together coordinate GTP.

This sequence in the N-terminal section; belongs to the DHBP synthase family. The protein in the C-terminal section; belongs to the GTP cyclohydrolase II family. Mg(2+) is required as a cofactor. It depends on Mn(2+) as a cofactor. The cofactor is Zn(2+).

It carries out the reaction D-ribulose 5-phosphate = (2S)-2-hydroxy-3-oxobutyl phosphate + formate + H(+). It catalyses the reaction GTP + 4 H2O = 2,5-diamino-6-hydroxy-4-(5-phosphoribosylamino)-pyrimidine + formate + 2 phosphate + 3 H(+). Its pathway is cofactor biosynthesis; riboflavin biosynthesis; 2-hydroxy-3-oxobutyl phosphate from D-ribulose 5-phosphate: step 1/1. It participates in cofactor biosynthesis; riboflavin biosynthesis; 5-amino-6-(D-ribitylamino)uracil from GTP: step 1/4. Its function is as follows. Catalyzes the conversion of D-ribulose 5-phosphate to formate and 3,4-dihydroxy-2-butanone 4-phosphate. Catalyzes the conversion of GTP to 2,5-diamino-6-ribosylamino-4(3H)-pyrimidinone 5'-phosphate (DARP), formate and pyrophosphate. This is Riboflavin biosynthesis protein RibBA from Bacillus cereus (strain B4264).